Consider the following 796-residue polypeptide: Nuclear GTPase SLIP-GC (796 aa).

107–114 contributes to the GTP binding site; sequence GITGAGKS. Coiled coils occupy residues 158–185 and 742–776; these read SDQE…EEAD and GLCK…LRRS.

It is found in the nucleus speckle. Its function is as follows. Nuclear GTPase found in germinal center B-cells, where it may inhibit function of the activation-induced cytidine deaminase AICDA. Reduces somatic hypermutation in B-cells which may enhance genome stability. The sequence is that of Nuclear GTPase SLIP-GC from Mus musculus (Mouse).